Consider the following 129-residue polypeptide: Large ribosomal subunit protein bL20 (129 aa).

Belongs to the bacterial ribosomal protein bL20 family.

In terms of biological role, binds directly to 23S ribosomal RNA and is necessary for the in vitro assembly process of the 50S ribosomal subunit. It is not involved in the protein synthesizing functions of that subunit. The chain is Large ribosomal subunit protein bL20 from Mycobacterium sp. (strain JLS).